Here is a 223-residue protein sequence, read N- to C-terminus: Translation initiation factor 6 (223 aa).

Belongs to the eIF-6 family.

In terms of biological role, binds to the 50S ribosomal subunit and prevents its association with the 30S ribosomal subunit to form the 70S initiation complex. This is Translation initiation factor 6 from Saccharolobus islandicus (strain M.16.27) (Sulfolobus islandicus).